We begin with the raw amino-acid sequence, 225 residues long: Probable proteasome subunit beta type-6 (225 aa).

The protein belongs to the peptidase T1B family. In terms of assembly, the 26S proteasome consists of a 20S proteasome core and two 19S regulatory subunits. The 20S proteasome core is composed of 28 subunits that are arranged in four stacked rings, resulting in a barrel-shaped structure. The two end rings are each formed by seven alpha subunits, and the two central rings are each formed by seven beta subunits. The catalytic chamber with the active sites is on the inside of the barrel.

Its subcellular location is the cytoplasm. It is found in the nucleus. Its function is as follows. Non-catalytic component of the proteasome, a multicatalytic proteinase complex which is characterized by its ability to cleave peptides with Arg, Phe, Tyr, Leu, and Glu adjacent to the leaving group at neutral or slightly basic pH. The proteasome has an ATP-dependent proteolytic activity. The sequence is that of Probable proteasome subunit beta type-6 (pam1) from Schizosaccharomyces pombe (strain 972 / ATCC 24843) (Fission yeast).